The following is a 275-amino-acid chain: uncharacterized protein (275 aa).

A run of 3 helical transmembrane segments spans residues 15–35, 39–59, and 70–90; these read LFLPLLGGSVSGSLFGRFLGS, AIMITTCVSFCALVVFIFGLF, and ILYLFLVGFVLSLIRIKVVYL. A disordered region spans residues 140–191; the sequence is SSKTDMDSQVAEAPQTEEGEPSVNQVPQEAGASHRVGPYQDQGLATDRNGNP.

The protein resides in the mitochondrion membrane. This is an uncharacterized protein from Arabidopsis thaliana (Mouse-ear cress).